Here is a 268-residue protein sequence, read N- to C-terminus: Tryptophan synthase alpha chain (268 aa).

Active-site proton acceptor residues include Glu49 and Asp60.

This sequence belongs to the TrpA family. In terms of assembly, tetramer of two alpha and two beta chains.

It catalyses the reaction (1S,2R)-1-C-(indol-3-yl)glycerol 3-phosphate + L-serine = D-glyceraldehyde 3-phosphate + L-tryptophan + H2O. It participates in amino-acid biosynthesis; L-tryptophan biosynthesis; L-tryptophan from chorismate: step 5/5. The alpha subunit is responsible for the aldol cleavage of indoleglycerol phosphate to indole and glyceraldehyde 3-phosphate. The sequence is that of Tryptophan synthase alpha chain from Vibrio metschnikovii.